The primary structure comprises 90 residues: Small ribosomal subunit protein bS16 (90 aa).

This sequence belongs to the bacterial ribosomal protein bS16 family.

This Streptococcus pneumoniae serotype 19F (strain G54) protein is Small ribosomal subunit protein bS16.